The primary structure comprises 650 residues: MASNNDPTVISMIERHLCDLPETNTSDLKTLTEEAVLSFHNISYQETVQSGFPLRKKAYVIERLSNISGIMKPGLNAIMGPQDGSRSLLLDVLAARRDPRGLSGDILINGKPRPANFKCTSGYVPQNDVVLGTVTVRDNLEFSAALRLPVTITRDEKRRRINEVLELLHLNKEQNIKPRSKELRKRTSIAMELVTEHPILFLDDPTTGLDLRTTTDVILVLRRMSKKGRTIIFSINQPQYSIFKFFDSLTLVASGKVMFHGPAQDALEYFRSAGYNYESHNNPADFFLDVINGGFSNILDTEEDGHEDDKYEELFERQYQVTGKLANMYAQSPLYSETRAILDQLLGEQKLERSSAVETTCVTPFCHQLKWIICQSFKNFKGFPWVTVIQAIITVILATAVGTAFRVLKNDCIEVQMRAGLLYLLTIFQCITSVSAGELFVIDRVRFLHEHTSGYYRVSSYFFGKLLAELIPRRLLPSTVFSLITYVIAGVKMSMKCFFTMICTIMVLAYSASSLPLSIGAGENAVAVPTLLVTIYFVFMLFFSGLSLYSGSFLPKLSWIQYFSIPHYGFRALLHNEFLGQNFCPEHNTEEVSRCHNYVICTGEEFLMIQGIDLSSWGFWENHLALVCTMIILLTITYVQLLQVKNIRNF.

The Cytoplasmic segment spans residues Met-1–Thr-387. An ABC transporter domain is found at Leu-37–Ser-279. In terms of domain architecture, ABC transmembrane type-2 spans Lys-381–Val-644. The chain crosses the membrane as a helical span at residues Val-388–Leu-408. Residues Lys-409–Gly-420 are Extracellular-facing. Residues Leu-421–Val-441 form a helical membrane-spanning segment. The Cytoplasmic portion of the chain corresponds to Ile-442–Glu-469. A helical membrane pass occupies residues Leu-470 to Gly-490. At Val-491–Phe-498 the chain is on the extracellular side. A helical transmembrane segment spans residues Phe-499–Ile-519. At Gly-520 to Ala-527 the chain is on the cytoplasmic side. The chain crosses the membrane as a helical span at residues Val-528–Leu-548. Residues Tyr-549–His-623 are Extracellular-facing. Residues Leu-624–Val-644 form a helical membrane-spanning segment. Residues Lys-645–Arg-648 lie on the Cytoplasmic side of the membrane.

It belongs to the ABC transporter superfamily. ABCG family. Eye pigment precursor importer (TC 3.A.1.204) subfamily. As to quaternary structure, may dimerize with another subunit to form a functional transporter. Highest levels of expression in thymus and spleen. Detected in lung and small intestine.

The protein resides in the membrane. In Mus musculus (Mouse), this protein is ATP-binding cassette sub-family G member 3 (Abcg3).